A 293-amino-acid polypeptide reads, in one-letter code: Glycerophosphodiester phosphodiesterase (293 aa).

A signal peptide spans 1–26; sequence MRKNRILALFVLSLGLLSFMVTPVSA. The 253-residue stretch at 38–290 folds into the GP-PDE domain; the sequence is ILTVAHRGAS…NYPDLFHKVK (253 aa). Catalysis depends on histidine 43, which acts as the Proton acceptor. Residues histidine 43, arginine 44, and glutamate 70 each contribute to the sn-glycerol 3-phosphate site. Ca(2+) contacts are provided by glutamate 70 and aspartate 72. 3 residues coordinate sn-glycerol 3-phosphate: histidine 85, glutamate 152, and glutamine 188. The active-site Proton donor is the histidine 85. Residue glutamate 152 participates in Ca(2+) binding.

It belongs to the glycerophosphoryl diester phosphodiesterase family. Ca(2+) is required as a cofactor.

It localises to the secreted. The enzyme catalyses a sn-glycero-3-phosphodiester + H2O = an alcohol + sn-glycerol 3-phosphate + H(+). In terms of biological role, glycerophosphodiester phosphodiesterase hydrolyzes glycerophosphodiesters into glycerol-3-phosphate (G3P) and the corresponding alcohol. Involved in wall teichoic acid (WTA) metabolism during phosphate starvation. Catalyzes the degradation of WTA, enabling the utilization of WTA as a phosphate reserve under limiting conditions. Is highly selective for the poly(gylcerol phosphate) WTA backbone and catalyzes exolytic cleavage of individual monomer units. In vitro is active toward the WTA oligomer mimics glycerophosphoglycerol (GPG) and bis-glycerophosphoglycerol (bGPG). In Bacillus subtilis (strain 168), this protein is Glycerophosphodiester phosphodiesterase.